We begin with the raw amino-acid sequence, 720 residues long: Calpain-12 (720 aa).

Positions 45 to 341 constitute a Calpain catalytic domain; the sequence is LFRDPCFPAG…FNTVQICSLS (297 aa). Residues Cys-105, His-259, and Asn-283 contribute to the active site. Residues 342 to 541 form a domain III region; sequence PEVLGPSPAG…DDVISADLDA (200 aa). Over residues 393–403 the composition is skewed to acidic residues; it reads DEEEDDDDEEG. The disordered stretch occupies residues 393 to 415; that stretch reads DEEEDDDDEEGPWGGWGAAGARG. The domain IV stretch occupies residues 542 to 720; it reads LQAPYKPLEL…KQWSEVATFS (179 aa). Positions 621–656 constitute an EF-hand domain; sequence GHLMSWQATFDKFDEDASGTMNSCELRLALTAAGFH. Ca(2+) contacts are provided by Asp-634, Asp-636, Ser-638, Thr-640, and Glu-645.

Belongs to the peptidase C2 family. In terms of tissue distribution, expression localized to the cortex of the hair follicle during the anagen phase of hair cycle.

Its function is as follows. Calcium-regulated non-lysosomal thiol-protease. The sequence is that of Calpain-12 (Capn12) from Mus musculus (Mouse).